The sequence spans 358 residues: Protein FAM187B (358 aa).

A signal peptide spans 1–17 (MLATLWLVGLSLPMLWA). The Extracellular portion of the chain corresponds to 18–322 (QRLISCPYKN…DKADSVLRRL (305 aa)). Asparagine 127 is a glycosylation site (N-linked (GlcNAc...) asparagine). Residues 323–343 (KLMVLSISVLAVGGLLCKVVF) form a helical membrane-spanning segment. Residues 344–358 (RPVCGKKRSQVLLVK) lie on the Cytoplasmic side of the membrane.

The protein belongs to the FAM187 family.

It localises to the membrane. The polypeptide is Protein FAM187B (Fam187b) (Mus musculus (Mouse)).